The following is a 320-amino-acid chain: Calnexin-independence factor 1 (320 aa).

Residues 16–36 (SAETSVGEKQPKRKRSEVRAE) are disordered.

It localises to the nucleus. The protein resides in the nucleolus. Functionally, induces a stably inheritable state of calnexin independence called the Cin state when overexpressed. The chain is Calnexin-independence factor 1 (cif1) from Schizosaccharomyces pombe (strain 972 / ATCC 24843) (Fission yeast).